Here is a 324-residue protein sequence, read N- to C-terminus: Beta-ketoacyl-[acyl-carrier-protein] synthase III (324 aa).

Residues cysteine 114 and histidine 246 contribute to the active site. The ACP-binding stretch occupies residues 247–251 (QANLR). Residue asparagine 276 is part of the active site.

It belongs to the thiolase-like superfamily. FabH family. In terms of assembly, homodimer.

It is found in the cytoplasm. It carries out the reaction malonyl-[ACP] + acetyl-CoA + H(+) = 3-oxobutanoyl-[ACP] + CO2 + CoA. The protein operates within lipid metabolism; fatty acid biosynthesis. Functionally, catalyzes the condensation reaction of fatty acid synthesis by the addition to an acyl acceptor of two carbons from malonyl-ACP. Catalyzes the first condensation reaction which initiates fatty acid synthesis and may therefore play a role in governing the total rate of fatty acid production. Possesses both acetoacetyl-ACP synthase and acetyl transacylase activities. Its substrate specificity determines the biosynthesis of branched-chain and/or straight-chain of fatty acids. The polypeptide is Beta-ketoacyl-[acyl-carrier-protein] synthase III (Campylobacter jejuni subsp. doylei (strain ATCC BAA-1458 / RM4099 / 269.97)).